The primary structure comprises 300 residues: N-carbamoylputrescine amidase (300 aa).

The 259-residue stretch at 8–266 (VTVAALQFAC…EAVLVAQFDL (259 aa)) folds into the CN hydrolase domain. The active-site Proton acceptor is E47. K120 (proton donor) is an active-site residue. C157 (nucleophile) is an active-site residue.

It belongs to the carbon-nitrogen hydrolase superfamily. Homooctamer.

The catalysed reaction is N-carbamoylputrescine + H2O + 2 H(+) = putrescine + NH4(+) + CO2. It participates in amine and polyamine biosynthesis; putrescine biosynthesis via agmatine pathway; putrescine from N-carbamoylputrescine (amidase route): step 1/1. In terms of biological role, involved in polyamine biosynthesis. The sequence is that of N-carbamoylputrescine amidase (CPA) from Solanum lycopersicum (Tomato).